A 191-amino-acid chain; its full sequence is MKTEDFRDNEYLEEYLKELWGNGANIAIAKLNDLINWGRSNSVWPLTFATSCCGIEFMCLGAARYDFARFGWEVTRNSPRQADVVFCCGTIVHKMAPVLKRLYDQMSEPKYVIALGSCAISGGPFKSSYHTIMGIDKIIPVDVYIPGCPPRPDAMIYGMIQLARKIKVQNFFKLPNLSHIEGNSLKKGERQ.

Residues Cys52, Cys53, Cys118, and Cys148 each contribute to the [4Fe-4S] cluster site.

This sequence belongs to the complex I 20 kDa subunit family. In terms of assembly, NDH-1 is composed of 14 different subunits. Subunits NuoB, C, D, E, F, and G constitute the peripheral sector of the complex. [4Fe-4S] cluster is required as a cofactor.

The protein resides in the cell inner membrane. The enzyme catalyses a quinone + NADH + 5 H(+)(in) = a quinol + NAD(+) + 4 H(+)(out). In terms of biological role, NDH-1 shuttles electrons from NADH, via FMN and iron-sulfur (Fe-S) centers, to quinones in the respiratory chain. The immediate electron acceptor for the enzyme in this species is believed to be a menaquinone. Couples the redox reaction to proton translocation (for every two electrons transferred, four hydrogen ions are translocated across the cytoplasmic membrane), and thus conserves the redox energy in a proton gradient. The sequence is that of NADH-quinone oxidoreductase subunit B from Azobacteroides pseudotrichonymphae genomovar. CFP2.